Consider the following 132-residue polypeptide: Large ribosomal subunit protein bL17 (132 aa).

This sequence belongs to the bacterial ribosomal protein bL17 family. Part of the 50S ribosomal subunit. Contacts protein L32.

This is Large ribosomal subunit protein bL17 from Ruthia magnifica subsp. Calyptogena magnifica.